The primary structure comprises 284 residues: Four and a half LIM domains protein 5 (284 aa).

The C4-type zinc-finger motif lies at 8-32 (CQYCTASLLGKKYVLKDDSPYCVTC). LIM zinc-binding domains are found at residues 39–100 (NYCE…ECSS), 101–160 (KCFH…KEFA), 161–220 (HYCN…LYAN), and 223–283 (VACS…MDTD).

In terms of assembly, interacts with CREM (via the third LIM domain). Interacts (via second LIM domain) with SPAG8. As to expression, testis-specific (at protein level).

It localises to the nucleus. May be involved in the regulation of spermatogenesis. Stimulates CREM transcriptional activity in a phosphorylation-independent manner. The polypeptide is Four and a half LIM domains protein 5 (FHL5) (Homo sapiens (Human)).